Here is a 92-residue protein sequence, read N- to C-terminus: Small ribosomal subunit protein uS19 (92 aa).

Belongs to the universal ribosomal protein uS19 family.

Functionally, protein S19 forms a complex with S13 that binds strongly to the 16S ribosomal RNA. In Aliivibrio salmonicida (strain LFI1238) (Vibrio salmonicida (strain LFI1238)), this protein is Small ribosomal subunit protein uS19.